A 321-amino-acid chain; its full sequence is Nitrilase blr3397 (321 aa).

The region spanning 10–277 (YKAAVVQAAS…ETILYADIAL (268 aa)) is the CN hydrolase domain. Glu-50 (proton acceptor) is an active-site residue. The active-site Proton donor is Lys-137. Cys-171 serves as the catalytic Nucleophile.

This sequence belongs to the carbon-nitrogen hydrolase superfamily. Nitrilase family. As to quaternary structure, homodecamer.

The catalysed reaction is an aliphatic nitrile + 2 H2O = a carboxylate + NH4(+). Functionally, nitrilase that acts on various kinds of nitrile compounds such as aliphatic and aromatic nitriles. Has higher activity toward aliphatic nitriles compared to aromatic nitriles. Among the different substrates tested, has the highest activity toward hydrocinnamonitrile. The protein is Nitrilase blr3397 of Bradyrhizobium diazoefficiens (strain JCM 10833 / BCRC 13528 / IAM 13628 / NBRC 14792 / USDA 110).